Here is a 330-residue protein sequence, read N- to C-terminus: D-cysteine desulfhydrase (330 aa).

N6-(pyridoxal phosphate)lysine is present on K52.

This sequence belongs to the ACC deaminase/D-cysteine desulfhydrase family. As to quaternary structure, homodimer. Requires pyridoxal 5'-phosphate as cofactor.

It catalyses the reaction D-cysteine + H2O = hydrogen sulfide + pyruvate + NH4(+) + H(+). In terms of biological role, catalyzes the alpha,beta-elimination reaction of D-cysteine and of several D-cysteine derivatives. It could be a defense mechanism against D-cysteine. This Yersinia pestis protein is D-cysteine desulfhydrase.